The primary structure comprises 506 residues: NAD(P)H-quinone oxidoreductase subunit 2 (506 aa).

13 helical membrane passes run 14 to 34 (AIIPEAFILLGIVGTLLVDLA), 42 to 62 (WAPIICYLSIGSSLLSLALQW), 79 to 99 (LAISFRAIISLSTLVSLLISW), 108 to 128 (PIGEFAAIVLSATLGAMLLCG), 132 to 152 (LISVFISLETLSVASYLLSGY), 167 to 187 (LLVGSAAAAVYLYGSSFLYGL), 206 to 226 (FITSLALVFVLSTVAFKIAAV), 240 to 260 (PTPVVAFLSVGSKTAGFAFAI), 276 to 296 (LLFTILAILSMALGNVVALAQ), 302 to 322 (MLAYSSIGQAGFVMIGIVSGT), 330 to 350 (VLYLAAYLFMNLGAFSCVILF), 374 to 394 (LGLSLCLLSLGGLPPMLGFFG), and 409 to 429 (LLVIVGLVTSVISIYYYISVI).

This sequence belongs to the complex I subunit 2 family. In terms of assembly, NDH-1 can be composed of about 15 different subunits; different subcomplexes with different compositions have been identified which probably have different functions.

Its subcellular location is the cellular thylakoid membrane. The catalysed reaction is a plastoquinone + NADH + (n+1) H(+)(in) = a plastoquinol + NAD(+) + n H(+)(out). It carries out the reaction a plastoquinone + NADPH + (n+1) H(+)(in) = a plastoquinol + NADP(+) + n H(+)(out). In terms of biological role, NDH-1 shuttles electrons from an unknown electron donor, via FMN and iron-sulfur (Fe-S) centers, to quinones in the respiratory and/or the photosynthetic chain. The immediate electron acceptor for the enzyme in this species is believed to be plastoquinone. Couples the redox reaction to proton translocation, and thus conserves the redox energy in a proton gradient. Cyanobacterial NDH-1 also plays a role in inorganic carbon-concentration. This Prochlorococcus marinus (strain MIT 9215) protein is NAD(P)H-quinone oxidoreductase subunit 2.